A 61-amino-acid chain; its full sequence is Temporin-SN4 (61 aa).

An N-terminal signal peptide occupies residues 1 to 22 (MFTLKKTLLLLFFLGTINLSLC). Residues 23–44 (EEERNAEEERRDGDDEMDVEVK) constitute a propeptide, removed in mature form. Residue lysine 61 is modified to Lysine amide.

The protein belongs to the frog skin active peptide (FSAP) family. Temporin subfamily. As to expression, expressed by the skin glands.

It is found in the secreted. In terms of biological role, antimicrobial peptide. Active against some Gram-positive and Gram-negative bacterial strains. Active against fungus C.glabrata 090902 but not against C.albicans ATCC 12231. Shows weak hemolytic activity against human erythrocytes. In Sylvirana spinulosa (Fine-spined frog), this protein is Temporin-SN4.